The primary structure comprises 166 residues: Large ribosomal subunit protein uL10 (166 aa).

The protein belongs to the universal ribosomal protein uL10 family. As to quaternary structure, part of the ribosomal stalk of the 50S ribosomal subunit. The N-terminus interacts with L11 and the large rRNA to form the base of the stalk. The C-terminus forms an elongated spine to which L12 dimers bind in a sequential fashion forming a multimeric L10(L12)X complex.

In terms of biological role, forms part of the ribosomal stalk, playing a central role in the interaction of the ribosome with GTP-bound translation factors. This Staphylococcus epidermidis (strain ATCC 35984 / DSM 28319 / BCRC 17069 / CCUG 31568 / BM 3577 / RP62A) protein is Large ribosomal subunit protein uL10.